Reading from the N-terminus, the 151-residue chain is 6,7-dimethyl-8-ribityllumazine synthase (151 aa).

5-amino-6-(D-ribitylamino)uracil is bound by residues Phe23, 55 to 57, and 79 to 81; these read AYE and AVI. 84–85 contacts (2S)-2-hydroxy-3-oxobutyl phosphate; it reads AT. His87 serves as the catalytic Proton donor. Residue Phe111 participates in 5-amino-6-(D-ribitylamino)uracil binding. Arg125 lines the (2S)-2-hydroxy-3-oxobutyl phosphate pocket.

This sequence belongs to the DMRL synthase family.

The catalysed reaction is (2S)-2-hydroxy-3-oxobutyl phosphate + 5-amino-6-(D-ribitylamino)uracil = 6,7-dimethyl-8-(1-D-ribityl)lumazine + phosphate + 2 H2O + H(+). Its pathway is cofactor biosynthesis; riboflavin biosynthesis; riboflavin from 2-hydroxy-3-oxobutyl phosphate and 5-amino-6-(D-ribitylamino)uracil: step 1/2. Functionally, catalyzes the formation of 6,7-dimethyl-8-ribityllumazine by condensation of 5-amino-6-(D-ribitylamino)uracil with 3,4-dihydroxy-2-butanone 4-phosphate. This is the penultimate step in the biosynthesis of riboflavin. The polypeptide is 6,7-dimethyl-8-ribityllumazine synthase (Leptospira interrogans serogroup Icterohaemorrhagiae serovar Lai (strain 56601)).